Here is a 209-residue protein sequence, read N- to C-terminus: MGKCQVISHPLIQHKLSILRRQTTSTKDFRELVNEIAMLMGYEVSRDLPLEDVDIQTPVSKTVQKQLAGKKLAIVPILRAGIGMVDGLLSLVPAAKVGHIGMYRNEETLEPVEYLVKLPEDINQRQIFLVDPMLATGGSAILAVDSLKKRGAANIKFVCLVAAPEGVKKLQEAHPDIDIFTAALDDHLNEHGYIVPGLGDAGDRLFGTK.

5-phospho-alpha-D-ribose 1-diphosphate is bound by residues Arg79, Arg104, and Asp131–Ser139. Uracil is bound by residues Ile194 and Gly199–Ala201. Position 200 (Asp200) interacts with 5-phospho-alpha-D-ribose 1-diphosphate.

The protein belongs to the UPRTase family. It depends on Mg(2+) as a cofactor.

It catalyses the reaction UMP + diphosphate = 5-phospho-alpha-D-ribose 1-diphosphate + uracil. The protein operates within pyrimidine metabolism; UMP biosynthesis via salvage pathway; UMP from uracil: step 1/1. Its activity is regulated as follows. Allosterically activated by GTP. In terms of biological role, catalyzes the conversion of uracil and 5-phospho-alpha-D-ribose 1-diphosphate (PRPP) to UMP and diphosphate. In Streptococcus pyogenes serotype M1, this protein is Uracil phosphoribosyltransferase.